The sequence spans 1141 residues: Putative late blight resistance protein homolog R1B-13 (1141 aa).

Residues 417 to 437 (DSLAFLKNQIQVIQMEFEILQ) are a coiled coil. Residues 516-742 (TVITHTSSQL…LSIVLVADVL (227 aa)) form the NB-ARC domain. LRR repeat units follow at residues 826–851 (FKFLKVLDLEHQVVIDFIPTELPYLR), 869–894 (LWNLETLILKGTSAKTLLLPSTVWDM), 992–1016 (APNLKYLKLSGYYLDSQYLSETVDH), 1017–1041 (LKHLEVLKLYNVEFGDYREWEVSNG), and 1043–1068 (FPQLKILKLENLSLMKWIVADDAFPI).

This sequence belongs to the disease resistance NB-LRR family.

The protein localises to the cytoplasm. It localises to the membrane. Functionally, confers resistance to late blight (Phytophthora infestans) races carrying the avirulence gene Avr1. Resistance proteins guard the plant against pathogens that contain an appropriate avirulence protein via an indirect interaction with this avirulence protein. That triggers a defense system including the hypersensitive response, which restricts the pathogen growth. In Solanum demissum (Wild potato), this protein is Putative late blight resistance protein homolog R1B-13 (R1B-13).